A 548-amino-acid chain; its full sequence is MQRSIFARFGNSSAAVSTLNRLSTTAAPHAKNGYATATGAGAAAATATASSTHAAAAAAAAANHSTQESGFDYEGLIDSELQKKRLDKSYRYFNNINRLAKEFPLAHRQREADKVTVWCSNDYLALSKHPEVLDAMHKTIDKYGCGAGGTRNIAGHNIPTLNLEAELATLHKKEGALVFSSCYVANDAVLSLLGQKMKDLVIFSDELNHASMIVGIKHANVKKHIFKHNDLNELEQLLQSYPKSVPKLIAFESVYSMAGSVADIEKICDLADKYGALTFLDEVHAVGLYGPHGAGVAEHCDFESHRASGIATPKTNDKGGAKTVMDRVDMITGTLGKSFGSVGGYVAASRKLIDWFRSFAPGFIFTTTLPPSVMAGATAAIRYQRCHIDLRTSQQKHTMYVKKAFHELGIPVIPNPSHIVPVLIGNADLAKQASDILINKHQIYVQAINFPTVARGTERLRITPTPGHTNDLSDILINAVDDVFNELQLPRVRDWESQGGLLGVGESGFVEESNLWTSSQLSLTNDDLNPNVRDPIVKQLEVSSGIKQ.

The N-terminal 22 residues, Met1 to Leu22, are a transit peptide targeting the mitochondrion. Residues Arg91, Ser204, and Lys223 each contribute to the substrate site. Pyridoxal 5'-phosphate-binding residues include Ser256, His284, and Thr334. The active site involves Lys337. Position 337 is an N6-(pyridoxal phosphate)lysine (Lys337). Pyridoxal 5'-phosphate is bound by residues Thr366 and Thr367. Thr452 contributes to the substrate binding site.

It belongs to the class-II pyridoxal-phosphate-dependent aminotransferase family. Homodimer. Interacts with MCX1. Pyridoxal 5'-phosphate is required as a cofactor.

It is found in the mitochondrion matrix. It carries out the reaction succinyl-CoA + glycine + H(+) = 5-aminolevulinate + CO2 + CoA. The protein operates within porphyrin-containing compound metabolism; protoporphyrin-IX biosynthesis; 5-aminolevulinate from glycine: step 1/1. With respect to regulation, ihnhibited by hemin. Catalyzes the synthesis of 5-aminolevulinate (ALA) from succinyl-CoA and glycine, the first and rate-limiting step in heme biosynthesis. The protein is 5-aminolevulinate synthase, mitochondrial of Saccharomyces cerevisiae (strain ATCC 204508 / S288c) (Baker's yeast).